The following is an 88-amino-acid chain: Large ribosomal subunit protein bL27 (88 aa).

The protein belongs to the bacterial ribosomal protein bL27 family.

The polypeptide is Large ribosomal subunit protein bL27 (Acidobacterium capsulatum (strain ATCC 51196 / DSM 11244 / BCRC 80197 / JCM 7670 / NBRC 15755 / NCIMB 13165 / 161)).